The following is a 545-amino-acid chain: Chaperonin GroEL 1 (545 aa).

ATP-binding positions include 30 to 33, lysine 51, 87 to 91, glycine 415, 479 to 481, and aspartate 495; these read TLGP, DGTTT, and NAA.

This sequence belongs to the chaperonin (HSP60) family. In terms of assembly, forms a cylinder of 14 subunits composed of two heptameric rings stacked back-to-back. Interacts with the co-chaperonin GroES.

The protein resides in the cytoplasm. It catalyses the reaction ATP + H2O + a folded polypeptide = ADP + phosphate + an unfolded polypeptide.. Together with its co-chaperonin GroES, plays an essential role in assisting protein folding. The GroEL-GroES system forms a nano-cage that allows encapsulation of the non-native substrate proteins and provides a physical environment optimized to promote and accelerate protein folding. This is Chaperonin GroEL 1 from Methylococcus capsulatus (strain ATCC 33009 / NCIMB 11132 / Bath).